A 451-amino-acid polypeptide reads, in one-letter code: Proline--tRNA ligase (451 aa).

This sequence belongs to the class-II aminoacyl-tRNA synthetase family. ProS type 2 subfamily. In terms of assembly, homodimer.

The protein resides in the cytoplasm. It catalyses the reaction tRNA(Pro) + L-proline + ATP = L-prolyl-tRNA(Pro) + AMP + diphosphate. Functionally, catalyzes the attachment of proline to tRNA(Pro) in a two-step reaction: proline is first activated by ATP to form Pro-AMP and then transferred to the acceptor end of tRNA(Pro). In Ruegeria sp. (strain TM1040) (Silicibacter sp.), this protein is Proline--tRNA ligase.